The primary structure comprises 373 residues: DNA replication and repair protein RecF (373 aa).

An ATP-binding site is contributed by 30 to 37 (GDNAQGKT).

The protein belongs to the RecF family.

The protein resides in the cytoplasm. The RecF protein is involved in DNA metabolism; it is required for DNA replication and normal SOS inducibility. RecF binds preferentially to single-stranded, linear DNA. It also seems to bind ATP. This is DNA replication and repair protein RecF from Oenococcus oeni (strain ATCC BAA-331 / PSU-1).